We begin with the raw amino-acid sequence, 88 residues long: Large ribosomal subunit protein bL27 (88 aa).

Residues 1 to 26 (MAHKKGTGSTRNGRDSNSKRLGVKAY) form a disordered region.

This sequence belongs to the bacterial ribosomal protein bL27 family.

This chain is Large ribosomal subunit protein bL27, found in Prochlorococcus marinus (strain MIT 9211).